A 364-amino-acid polypeptide reads, in one-letter code: Cobalt-precorrin-5B C(1)-methyltransferase (364 aa).

The protein belongs to the CbiD family.

The enzyme catalyses Co-precorrin-5B + S-adenosyl-L-methionine = Co-precorrin-6A + S-adenosyl-L-homocysteine. It functions in the pathway cofactor biosynthesis; adenosylcobalamin biosynthesis; cob(II)yrinate a,c-diamide from sirohydrochlorin (anaerobic route): step 6/10. Catalyzes the methylation of C-1 in cobalt-precorrin-5B to form cobalt-precorrin-6A. The polypeptide is Cobalt-precorrin-5B C(1)-methyltransferase (Pseudomonas putida (strain GB-1)).